A 412-amino-acid polypeptide reads, in one-letter code: Tyrosine--tRNA ligase (412 aa).

Tyrosine 38 is an L-tyrosine binding site. The short motif at 43–52 (CTANSLHIGS) is the 'HIGH' region element. L-tyrosine-binding residues include tyrosine 170 and glutamine 174. Positions 230 to 234 (KMGKT) match the 'KMSKS' region motif. An ATP-binding site is contributed by lysine 233. Positions 343–409 (IPISKLLHMW…CGKKRRLKVV (67 aa)) constitute an S4 RNA-binding domain.

The protein belongs to the class-I aminoacyl-tRNA synthetase family. TyrS type 1 subfamily. In terms of assembly, homodimer.

The protein localises to the cytoplasm. It carries out the reaction tRNA(Tyr) + L-tyrosine + ATP = L-tyrosyl-tRNA(Tyr) + AMP + diphosphate + H(+). Catalyzes the attachment of tyrosine to tRNA(Tyr) in a two-step reaction: tyrosine is first activated by ATP to form Tyr-AMP and then transferred to the acceptor end of tRNA(Tyr). This is Tyrosine--tRNA ligase from Anaplasma phagocytophilum (strain HZ).